The sequence spans 178 residues: Hypoxanthine phosphoribosyltransferase (178 aa).

Residues R43 and G44 each contribute to the diphosphate site. E99 contacts GMP. An IMP-binding site is contributed by E99. 2 residues coordinate Mg(2+): E99 and D100. D103 serves as the catalytic Proton acceptor. GMP contacts are provided by residues D103–L108, K131, and D159. IMP-binding positions include D103–L108 and K131. Residue R165 participates in diphosphate binding.

The protein belongs to the purine/pyrimidine phosphoribosyltransferase family. Homotetramer. It depends on Mg(2+) as a cofactor.

It is found in the cytoplasm. It catalyses the reaction IMP + diphosphate = hypoxanthine + 5-phospho-alpha-D-ribose 1-diphosphate. The catalysed reaction is GMP + diphosphate = guanine + 5-phospho-alpha-D-ribose 1-diphosphate. It functions in the pathway purine metabolism; IMP biosynthesis via salvage pathway; IMP from hypoxanthine: step 1/1. Its function is as follows. Purine salvage pathway enzyme which catalyzes the transfer of the ribosyl-5-phosphate group from 5-phospho-alpha-D-ribose 1-diphosphate (PRPP) to the N9 position of hypoxanthine to yield IMP (inosine 5'-monophosphate). To a lesser extent, can also act on guanine leading to GMP, but shows a highly less efficient activity with xanthine. The protein is Hypoxanthine phosphoribosyltransferase (hpt) of Shigella flexneri.